Reading from the N-terminus, the 1062-residue chain is NACHT, LRR and PYD domains-containing protein 2 (1062 aa).

In terms of domain architecture, Pyrin spans 1–94 (MVSSAQMGFN…SERAKDEVRE (94 aa)). Positions 207 to 526 (YTVVLYGPAG…LEKEEEEDRD (320 aa)) constitute an NACHT domain. 213 to 220 (GPAGLGKT) contributes to the ATP binding site. Ser-671 carries the post-translational modification Phosphoserine. LRR repeat units lie at residues 812 to 832 (SLTC…KLLY), 841 to 861 (FLQR…KDLA), 869 to 889 (ELTH…KFLC), 898 to 918 (KLQT…CDLT), 926 to 946 (SLLC…KFLC), 955 to 976 (NLRC…DLCS), 983 to 1003 (SLVT…KMLF), and 1010 to 1033 (SGTL…LLEE).

It belongs to the NLRP family. Interacts with CHUK. Interacts with IKBKB. Interacts with IKBKG. Interacts with MEFV. Interacts with PYCARD. Interacts (via pyrin domain) with PYDC2. Interacts with CARD8. Expressed at high levels in lung, placenta and thymus and at lower levels in ovary, intestine and brain. Highly abundant in oocytes and early embryos, however poorly expressed in somatic tissues such as brain, kidney, liver and spinal cord.

The protein localises to the cytoplasm. In terms of biological role, suppresses TNF- and CD40-induced NFKB1 activity at the level of the IKK complex, by inhibiting NFKBIA degradation induced by TNF. When associated with PYCARD, activates CASP1, leading to the secretion of mature pro-inflammatory cytokine IL1B. May be a component of the inflammasome, a protein complex which also includes PYCARD, CARD8 and CASP1 and whose function would be the activation of pro-inflammatory caspases. The polypeptide is NACHT, LRR and PYD domains-containing protein 2 (NLRP2) (Homo sapiens (Human)).